The following is a 184-amino-acid chain: UPF0397 protein SAS2570 (184 aa).

5 helical membrane passes run Val11–Pro31, Ala44–Val64, Ala77–Leu97, Met111–Pro131, and Gln148–Leu168.

Belongs to the UPF0397 family.

It localises to the cell membrane. The polypeptide is UPF0397 protein SAS2570 (Staphylococcus aureus (strain MSSA476)).